The primary structure comprises 615 residues: Dihydroxy-acid dehydratase (615 aa).

D85 contributes to the Mg(2+) binding site. C126 provides a ligand contact to [2Fe-2S] cluster. The Mg(2+) site is built by D127 and K128. The residue at position 128 (K128) is an N6-carboxylysine. C199 is a binding site for [2Fe-2S] cluster. E495 contacts Mg(2+). S521 functions as the Proton acceptor in the catalytic mechanism.

It belongs to the IlvD/Edd family. In terms of assembly, homodimer. Requires [2Fe-2S] cluster as cofactor. Mg(2+) serves as cofactor.

The catalysed reaction is (2R)-2,3-dihydroxy-3-methylbutanoate = 3-methyl-2-oxobutanoate + H2O. It carries out the reaction (2R,3R)-2,3-dihydroxy-3-methylpentanoate = (S)-3-methyl-2-oxopentanoate + H2O. Its pathway is amino-acid biosynthesis; L-isoleucine biosynthesis; L-isoleucine from 2-oxobutanoate: step 3/4. It participates in amino-acid biosynthesis; L-valine biosynthesis; L-valine from pyruvate: step 3/4. Functions in the biosynthesis of branched-chain amino acids. Catalyzes the dehydration of (2R,3R)-2,3-dihydroxy-3-methylpentanoate (2,3-dihydroxy-3-methylvalerate) into 2-oxo-3-methylpentanoate (2-oxo-3-methylvalerate) and of (2R)-2,3-dihydroxy-3-methylbutanoate (2,3-dihydroxyisovalerate) into 2-oxo-3-methylbutanoate (2-oxoisovalerate), the penultimate precursor to L-isoleucine and L-valine, respectively. This chain is Dihydroxy-acid dehydratase, found in Mannheimia succiniciproducens (strain KCTC 0769BP / MBEL55E).